Here is a 238-residue protein sequence, read N- to C-terminus: Probable septum site-determining protein MinC (238 aa).

Belongs to the MinC family. In terms of assembly, interacts with MinD and FtsZ.

Cell division inhibitor that blocks the formation of polar Z ring septums. Rapidly oscillates between the poles of the cell to destabilize FtsZ filaments that have formed before they mature into polar Z rings. Prevents FtsZ polymerization. This Xylella fastidiosa (strain M12) protein is Probable septum site-determining protein MinC.